The following is a 298-amino-acid chain: Pheromone-regulated membrane protein 9 (298 aa).

Topologically, residues 1 to 111 are cytoplasmic; the sequence is MSPQYHFYFV…YWIYEVTRHK (111 aa). Residues 112–132 traverse the membrane as a helical segment; sequence AAVILLVLIVTSILLLVFFYN. Residues 133-137 lie on the Extracellular side of the membrane; that stretch reads TEFCV. A helical transmembrane segment spans residues 138 to 158; sequence AFEILLFSFCFPGTCMVVIAF. Topologically, residues 159–298 are cytoplasmic; the sequence is SEPIGDREFK…QEYPGVDEFF (140 aa). Positions 235-262 are disordered; the sequence is SSASNVKDAQSNDETAGTPNEAAESSSF. The COPII binding stretch occupies residues 297-298; it reads FF.

Belongs to the DUP/COS family. As to quaternary structure, interacts with PRM8. Binds to COPII coated vesicles.

The protein resides in the cell membrane. May be involved in endoplasmic reticulum exit trafficking of proteins. The sequence is that of Pheromone-regulated membrane protein 9 (PRM9) from Saccharomyces cerevisiae (strain ATCC 204508 / S288c) (Baker's yeast).